The following is a 177-amino-acid chain: Nucleoside-triphosphatase THEP1 (177 aa).

Residues 10–17 and 101–108 each bind ATP; these read GKPGIGKT and CLVIDEIG.

It belongs to the THEP1 NTPase family.

It catalyses the reaction a ribonucleoside 5'-triphosphate + H2O = a ribonucleoside 5'-diphosphate + phosphate + H(+). Its function is as follows. Has nucleotide phosphatase activity towards ATP, GTP, CTP, TTP and UTP. May hydrolyze nucleoside diphosphates with lower efficiency. The protein is Nucleoside-triphosphatase THEP1 of Natranaerobius thermophilus (strain ATCC BAA-1301 / DSM 18059 / JW/NM-WN-LF).